A 424-amino-acid chain; its full sequence is 3-phosphoshikimate 1-carboxyvinyltransferase (424 aa).

Residues lysine 21, serine 22, and arginine 26 each contribute to the 3-phosphoshikimate site. Position 21 (lysine 21) interacts with phosphoenolpyruvate. Phosphoenolpyruvate-binding residues include glycine 91 and arginine 119. Residues serine 164, glutamine 166, aspartate 310, and lysine 337 each coordinate 3-phosphoshikimate. Position 166 (glutamine 166) interacts with phosphoenolpyruvate. The Proton acceptor role is filled by aspartate 310. Residues arginine 341 and arginine 382 each coordinate phosphoenolpyruvate.

It belongs to the EPSP synthase family. As to quaternary structure, monomer.

Its subcellular location is the cytoplasm. It catalyses the reaction 3-phosphoshikimate + phosphoenolpyruvate = 5-O-(1-carboxyvinyl)-3-phosphoshikimate + phosphate. Its pathway is metabolic intermediate biosynthesis; chorismate biosynthesis; chorismate from D-erythrose 4-phosphate and phosphoenolpyruvate: step 6/7. Catalyzes the transfer of the enolpyruvyl moiety of phosphoenolpyruvate (PEP) to the 5-hydroxyl of shikimate-3-phosphate (S3P) to produce enolpyruvyl shikimate-3-phosphate and inorganic phosphate. The chain is 3-phosphoshikimate 1-carboxyvinyltransferase from Campylobacter curvus (strain 525.92).